The primary structure comprises 178 residues: Prion-like protein doppel (178 aa).

The first 25 residues, 1–25 (MRKHLGGCWLAIVCILLFSQLCSVK), serve as a signal peptide directing secretion. A flexible tail region spans residues 27–50 (RGIKHRIKWNRKVLPSTSQVTEAR). Residues 51-154 (TAEIRPGAFI…KHCDFWLERG (104 aa)) form a globular region. Disulfide bonds link Cys-94-Cys-147 and Cys-108-Cys-142. Asn-98 and Asn-110 each carry an N-linked (GlcNAc...) asparagine glycan. The tract at residues 124–141 (KQDNKLYQRVLWQLIREL) is cu(2+) binding. A lipid anchor (GPI-anchor amidated glycine) is attached at Gly-154. A propeptide spans 155-178 (AGLRVTLDQPMMLCLLVFIWFIVK) (removed in mature form).

Belongs to the prion family. In terms of processing, N-glycosylated. Post-translationally, O-glycosylated. In terms of tissue distribution, strongly expressed in testis. Detected at low levels in ovary, spleen, kidney and mammary gland.

Its subcellular location is the cell membrane. In terms of biological role, required for normal acrosome reaction and for normal male fertility. Can bind Cu(2+). The polypeptide is Prion-like protein doppel (PRND) (Bos taurus (Bovine)).